Here is a 295-residue protein sequence, read N- to C-terminus: Nucleotide-binding protein Sare_3328 (295 aa).

19-26 (GVSGGGRS) contacts ATP. Residue 70–73 (DVRS) coordinates GTP.

The protein belongs to the RapZ-like family.

Displays ATPase and GTPase activities. This chain is Nucleotide-binding protein Sare_3328, found in Salinispora arenicola (strain CNS-205).